A 738-amino-acid chain; its full sequence is Photosystem I P700 chlorophyll a apoprotein A2 (738 aa).

8 helical membrane-spanning segments follow: residues 46 to 69 (LFST…FHIA), 135 to 158 (LYQG…LHLQ), 175 to 199 (LNHH…HVAI), 273 to 291 (IAHH…GHMY), 333 to 356 (LHFQ…QHMY), 372 to 398 (AALY…IFFI), 420 to 442 (AIIS…LYVH), and 521 to 539 (FLVH…LILV). The [4Fe-4S] cluster site is built by cysteine 563 and cysteine 572. A run of 2 helical transmembrane segments spans residues 579–600 (AFYL…YWHW) and 647–669 (LAVW…MFLI). The chlorophyll a site is built by histidine 658, methionine 666, and tyrosine 674. Tryptophan 675 contacts phylloquinone. Residues 711–731 (VVGLAHFTVGYVLTYGAFLIA) form a helical membrane-spanning segment.

The protein belongs to the PsaA/PsaB family. The PsaA/B heterodimer binds the P700 chlorophyll special pair and subsequent electron acceptors. PSI consists of a core antenna complex that captures photons, and an electron transfer chain that converts photonic excitation into a charge separation. The cyanobacterial PSI reaction center is composed of one copy each of PsaA,B,C,D,E,F,I,J,K,L,M and X, and forms trimeric complexes. It depends on PSI electron transfer chain: 5 chlorophyll a, 1 chlorophyll a', 2 phylloquinones and 3 4Fe-4S clusters. PSI core antenna: 90 chlorophyll a, 22 carotenoids, 3 phospholipids and 1 galactolipid. P700 is a chlorophyll a/chlorophyll a' dimer, A0 is one or more chlorophyll a, A1 is one or both phylloquinones and FX is a shared 4Fe-4S iron-sulfur center. as a cofactor.

The protein localises to the cellular thylakoid membrane. It carries out the reaction reduced [plastocyanin] + hnu + oxidized [2Fe-2S]-[ferredoxin] = oxidized [plastocyanin] + reduced [2Fe-2S]-[ferredoxin]. Functionally, psaA and PsaB bind P700, the primary electron donor of photosystem I (PSI), as well as the electron acceptors A0, A1 and FX. PSI is a plastocyanin/cytochrome c6-ferredoxin oxidoreductase, converting photonic excitation into a charge separation, which transfers an electron from the donor P700 chlorophyll pair to the spectroscopically characterized acceptors A0, A1, FX, FA and FB in turn. Oxidized P700 is reduced on the lumenal side of the thylakoid membrane by plastocyanin or cytochrome c6. This Synechococcus sp. (strain CC9311) protein is Photosystem I P700 chlorophyll a apoprotein A2.